Consider the following 303-residue polypeptide: Glutathione transport system permease protein GsiD (303 aa).

6 consecutive transmembrane segments (helical) span residues 40 to 60 (AMTA…ARWI), 105 to 125 (LAAG…LGLL), 144 to 164 (LFAF…GSGI), 165 to 185 (ANVI…LVRG), 222 to 242 (IVVF…SLSF), and 266 to 286 (VIAP…VLAF). Positions 101–290 (AQISLAAGVF…LTVLAFNLLG (190 aa)) constitute an ABC transmembrane type-1 domain.

Belongs to the binding-protein-dependent transport system permease family. In terms of assembly, the complex is composed of two ATP-binding proteins (GsiA), two transmembrane proteins (GsiC and GsiD) and a solute-binding protein (GsiB).

It localises to the cell inner membrane. Its function is as follows. Part of the ABC transporter complex GsiABCD involved in glutathione import. Probably responsible for the translocation of the substrate across the membrane. The protein is Glutathione transport system permease protein GsiD of Shigella dysenteriae serotype 1 (strain Sd197).